The following is a 297-amino-acid chain: Ketohexokinase (297 aa).

Residues Asp15, Gly41, Asn42, and Asn45 each coordinate beta-D-fructose. Residues Arg107, 225–228 (AEEG), and 254–257 (GAGD) contribute to the ATP site. A beta-D-fructose-binding site is contributed by Asp257.

This sequence belongs to the carbohydrate kinase PfkB family. As to quaternary structure, homodimer.

It catalyses the reaction beta-D-fructose + ATP = beta-D-fructose 1-phosphate + ADP + H(+). It functions in the pathway carbohydrate metabolism; fructose metabolism. Requires potassium. Inhibition by ADP. Its function is as follows. Catalyzes the phosphorylation of the ketose sugar fructose to fructose-1-phosphate. The sequence is that of Ketohexokinase (KHK) from Pongo abelii (Sumatran orangutan).